A 237-amino-acid polypeptide reads, in one-letter code: Ribonuclease 3 (237 aa).

Residues 8 to 134 (RSALLEKLGV…VIGAVYLDAG (127 aa)) enclose the RNase III domain. Glutamate 47 contacts Mg(2+). Aspartate 51 is a catalytic residue. Mg(2+) contacts are provided by aspartate 120 and glutamate 123. Glutamate 123 is a catalytic residue. The DRBM domain occupies 161–229 (DPKTSLQEAA…ALSAWTALTN (69 aa)).

The protein belongs to the ribonuclease III family. As to quaternary structure, homodimer. It depends on Mg(2+) as a cofactor.

It localises to the cytoplasm. It catalyses the reaction Endonucleolytic cleavage to 5'-phosphomonoester.. Its function is as follows. Digests double-stranded RNA. Involved in the processing of primary rRNA transcript to yield the immediate precursors to the large and small rRNAs (23S and 16S). Processes some mRNAs, and tRNAs when they are encoded in the rRNA operon. Processes pre-crRNA and tracrRNA of type II CRISPR loci if present in the organism. This Leifsonia xyli subsp. xyli (strain CTCB07) protein is Ribonuclease 3.